Here is a 413-residue protein sequence, read N- to C-terminus: Adenylosuccinate synthetase (413 aa).

GTP contacts are provided by residues Gly11–Lys17 and Gly39–Thr41. Asp12 serves as the catalytic Proton acceptor. Mg(2+) contacts are provided by Asp12 and Gly39. IMP-binding positions include Asp12–Lys15, Asn37–His40, Thr125, Arg139, Gln217, Thr232, and Arg296. Residue His40 is the Proton donor of the active site. Substrate is bound at residue Thr292–Arg298. GTP is bound by residues Arg298, Lys324–Asp326, and Ser402–Gly404.

The protein belongs to the adenylosuccinate synthetase family. In terms of assembly, homodimer. The cofactor is Mg(2+).

Its subcellular location is the cytoplasm. The enzyme catalyses IMP + L-aspartate + GTP = N(6)-(1,2-dicarboxyethyl)-AMP + GDP + phosphate + 2 H(+). It functions in the pathway purine metabolism; AMP biosynthesis via de novo pathway; AMP from IMP: step 1/2. Plays an important role in the de novo pathway of purine nucleotide biosynthesis. Catalyzes the first committed step in the biosynthesis of AMP from IMP. The chain is Adenylosuccinate synthetase from Nautilia profundicola (strain ATCC BAA-1463 / DSM 18972 / AmH).